The primary structure comprises 290 residues: 4-hydroxy-tetrahydrodipicolinate synthase (290 aa).

Residue Thr44 participates in pyruvate binding. The active-site Proton donor/acceptor is Tyr132. Lys160 (schiff-base intermediate with substrate) is an active-site residue. Ile202 lines the pyruvate pocket.

This sequence belongs to the DapA family. Homotetramer; dimer of dimers.

Its subcellular location is the cytoplasm. It carries out the reaction L-aspartate 4-semialdehyde + pyruvate = (2S,4S)-4-hydroxy-2,3,4,5-tetrahydrodipicolinate + H2O + H(+). Its pathway is amino-acid biosynthesis; L-lysine biosynthesis via DAP pathway; (S)-tetrahydrodipicolinate from L-aspartate: step 3/4. Catalyzes the condensation of (S)-aspartate-beta-semialdehyde [(S)-ASA] and pyruvate to 4-hydroxy-tetrahydrodipicolinate (HTPA). The chain is 4-hydroxy-tetrahydrodipicolinate synthase from Pelobacter propionicus (strain DSM 2379 / NBRC 103807 / OttBd1).